The primary structure comprises 85 residues: MAHKKAGGSTNNGRDSVSKRLGVKRFGGQVVLSGNILVRQRGTKFHPGTNVRKGKDDTLFATMDGKVIFAKKGKFMHQYVSIETA.

The protein belongs to the bacterial ribosomal protein bL27 family.

This is Large ribosomal subunit protein bL27 from Ruthia magnifica subsp. Calyptogena magnifica.